Here is a 115-residue protein sequence, read N- to C-terminus: uncharacterized protein (115 aa).

This is an uncharacterized protein from Schizosaccharomyces pombe (strain 972 / ATCC 24843) (Fission yeast).